The following is a 247-amino-acid chain: Triosephosphate isomerase (247 aa).

9-11 (NWK) is a substrate binding site. Residue histidine 93 is the Electrophile of the active site. Catalysis depends on glutamate 163, which acts as the Proton acceptor. Residues glycine 169, serine 209, and 230 to 231 (GG) contribute to the substrate site.

This sequence belongs to the triosephosphate isomerase family. As to quaternary structure, homodimer.

The protein localises to the cytoplasm. It carries out the reaction D-glyceraldehyde 3-phosphate = dihydroxyacetone phosphate. It participates in carbohydrate biosynthesis; gluconeogenesis. It functions in the pathway carbohydrate degradation; glycolysis; D-glyceraldehyde 3-phosphate from glycerone phosphate: step 1/1. Involved in the gluconeogenesis. Catalyzes stereospecifically the conversion of dihydroxyacetone phosphate (DHAP) to D-glyceraldehyde-3-phosphate (G3P). The sequence is that of Triosephosphate isomerase from Dinoroseobacter shibae (strain DSM 16493 / NCIMB 14021 / DFL 12).